We begin with the raw amino-acid sequence, 362 residues long: Anthranilate phosphoribosyltransferase (362 aa).

5-phospho-alpha-D-ribose 1-diphosphate contacts are provided by residues Gly96, 99–100 (GD), Thr104, 106–109 (NIST), 124–132 (KHGNRAASS), and Gly136. Gly96 contacts anthranilate. A Mg(2+)-binding site is contributed by Ser108. Asn127 is an anthranilate binding site. Arg182 serves as a coordination point for anthranilate. Mg(2+) contacts are provided by Asp240 and Glu241.

Belongs to the anthranilate phosphoribosyltransferase family. As to quaternary structure, homodimer. Mg(2+) serves as cofactor.

The enzyme catalyses N-(5-phospho-beta-D-ribosyl)anthranilate + diphosphate = 5-phospho-alpha-D-ribose 1-diphosphate + anthranilate. It functions in the pathway amino-acid biosynthesis; L-tryptophan biosynthesis; L-tryptophan from chorismate: step 2/5. Catalyzes the transfer of the phosphoribosyl group of 5-phosphorylribose-1-pyrophosphate (PRPP) to anthranilate to yield N-(5'-phosphoribosyl)-anthranilate (PRA). In Rhodococcus opacus (strain B4), this protein is Anthranilate phosphoribosyltransferase.